Here is a 122-residue protein sequence, read N- to C-terminus: Large ribosomal subunit protein uL14 (122 aa).

The protein belongs to the universal ribosomal protein uL14 family. In terms of assembly, part of the 50S ribosomal subunit. Forms a cluster with proteins L3 and L19. In the 70S ribosome, L14 and L19 interact and together make contacts with the 16S rRNA in bridges B5 and B8.

Its function is as follows. Binds to 23S rRNA. Forms part of two intersubunit bridges in the 70S ribosome. In Flavobacterium psychrophilum (strain ATCC 49511 / DSM 21280 / CIP 103535 / JIP02/86), this protein is Large ribosomal subunit protein uL14.